The sequence spans 503 residues: Lysine--tRNA ligase (503 aa).

Mg(2+) contacts are provided by Glu-410 and Glu-417.

It belongs to the class-II aminoacyl-tRNA synthetase family. As to quaternary structure, homodimer. Requires Mg(2+) as cofactor.

The protein resides in the cytoplasm. It carries out the reaction tRNA(Lys) + L-lysine + ATP = L-lysyl-tRNA(Lys) + AMP + diphosphate. The chain is Lysine--tRNA ligase from Prochlorococcus marinus (strain MIT 9211).